The chain runs to 305 residues: N-acetylmuramic acid 6-phosphate etherase (305 aa).

Residues 59 to 222 (TSKALGKGGR…STGVMVKLGK (164 aa)) form the SIS domain. Glu-87 acts as the Proton donor in catalysis. The active site involves Glu-118.

Belongs to the GCKR-like family. MurNAc-6-P etherase subfamily. In terms of assembly, homodimer.

It catalyses the reaction N-acetyl-D-muramate 6-phosphate + H2O = N-acetyl-D-glucosamine 6-phosphate + (R)-lactate. The protein operates within amino-sugar metabolism; N-acetylmuramate degradation. Its function is as follows. Specifically catalyzes the cleavage of the D-lactyl ether substituent of MurNAc 6-phosphate, producing GlcNAc 6-phosphate and D-lactate. The polypeptide is N-acetylmuramic acid 6-phosphate etherase (Crocosphaera subtropica (strain ATCC 51142 / BH68) (Cyanothece sp. (strain ATCC 51142))).